The following is a 323-amino-acid chain: Acetyl-coenzyme A carboxylase carboxyl transferase subunit alpha (323 aa).

A CoA carboxyltransferase C-terminal domain is found at 35 to 296 (EVLSELDELR…GMTLKKCLDE (262 aa)).

The protein belongs to the AccA family. As to quaternary structure, acetyl-CoA carboxylase is a heterohexamer composed of biotin carboxyl carrier protein (AccB), biotin carboxylase (AccC) and two subunits each of ACCase subunit alpha (AccA) and ACCase subunit beta (AccD).

It localises to the cytoplasm. The catalysed reaction is N(6)-carboxybiotinyl-L-lysyl-[protein] + acetyl-CoA = N(6)-biotinyl-L-lysyl-[protein] + malonyl-CoA. Its pathway is lipid metabolism; malonyl-CoA biosynthesis; malonyl-CoA from acetyl-CoA: step 1/1. In terms of biological role, component of the acetyl coenzyme A carboxylase (ACC) complex. First, biotin carboxylase catalyzes the carboxylation of biotin on its carrier protein (BCCP) and then the CO(2) group is transferred by the carboxyltransferase to acetyl-CoA to form malonyl-CoA. The polypeptide is Acetyl-coenzyme A carboxylase carboxyl transferase subunit alpha (Aquifex aeolicus (strain VF5)).